The sequence spans 536 residues: MEIRQHEWLSASPHEGFEQMRLKSRPKEPSPSLTRVGANFYSSVKQQDYSASVWLRRKDKLEHSQQKCIVIFALVCCFAVLVALIFSAVDIMGEDEDGLSEKNCQNKCRIALVENIPEGLNYSEDAPFHLPLFQGWMNLLNMAKKSVDIVSSHWDLNHTHPAACQGQRLFEKLLQLTSQNIEVKLVSDVTADSKVLEALKLKGAEVTYMNMTAYNKGRLQSSFWIVDKQHVYIGSAGLDWRSLGQMKELGVIFYNCSCLVLDLQRIFALYSSLKFKSRVPQTWSKRLYGVYDNEKKLQLQLNETKSQAFVSNSPKLFCPKNRSFDIDAIYSVIDDAKQYVYIAVTDYLPISSTSSKRTYWPDLDGKIREALVLRSVKVRLLISFWKETDPLTFNFISSLKAICTEIANCSLKVKFFDLERENACATKEQKNQTFPKLNRNKYMVTDGAAYIGNFDWVGNDFTQNAGTGLVINQADVRDNRSIIKQLKDVFERDWYSPYAKSIQPTKQPNCSSLSKLKSPSKQPAMANATGREPLSV.

The Cytoplasmic portion of the chain corresponds to 1–68; sequence MEIRQHEWLS…DKLEHSQQKC (68 aa). Residues 69 to 89 form a helical membrane-spanning segment; it reads IVIFALVCCFAVLVALIFSAV. Over 90 to 536 the chain is Extracellular; it reads DIMGEDEDGL…NATGREPLSV (447 aa). Asn-121 carries N-linked (GlcNAc...) asparagine glycosylation. The region spanning 215-242 is the PLD phosphodiesterase 1 domain; it reads NKGRLQSSFWIVDKQHVYIGSAGLDWRS. The N-linked (GlcNAc...) asparagine glycan is linked to Asn-302. The region spanning 434–460 is the PLD phosphodiesterase 2 domain; that stretch reads FPKLNRNKYMVTDGAAYIGNFDWVGND. The segment at 503–536 is disordered; the sequence is QPTKQPNCSSLSKLKSPSKQPAMANATGREPLSV. Positions 511–521 are enriched in low complexity; it reads SSLSKLKSPSK.

The protein belongs to the phospholipase D family.

It localises to the membrane. The sequence is that of Inactive phospholipase D5 (Pld5) from Mus musculus (Mouse).